The sequence spans 198 residues: uncharacterized protein (198 aa).

Positions 40 to 111 are disordered; that stretch reads GSALPPQAPT…LSRGAGQGAP (72 aa). A compositionally biased stretch (low complexity) spans 60-74; that stretch reads SSRTPGPRPPRSTLR.

This is an uncharacterized protein from Homo sapiens (Human).